Consider the following 236-residue polypeptide: MPRKHLIASGINKKQQQQAKIWMKCAKEIKAAAKMGGPNPEANSRLKVAIERALNNNLSRDSIERNINGASKDIDNLKELTYEGYGPNGLAIIVRALTDNEQRTISAIRGYFSKLQGQIAKPNSVSMLFNECGQLLINKETKSLDEWFEILIDQSIIDINEDDKIIEILVKPEDFSTVKLILEKNNADIKSAEIKLIPNDFISLDEYARERLVRFVNACENDDDISWVITNYEEEL.

The protein belongs to the TACO1 family.

It localises to the cytoplasm. This is Probable transcriptional regulatory protein UU295 from Ureaplasma parvum serovar 3 (strain ATCC 700970).